The sequence spans 465 residues: tRNA modification GTPase MnmE (465 aa).

(6S)-5-formyl-5,6,7,8-tetrahydrofolate-binding residues include R21, E85, and K124. The TrmE-type G domain maps to G220 to H387. A K(+)-binding site is contributed by N230. GTP is bound by residues N230–T235, S249–T255, D274–G277, and N337–D340. S234 lines the Mg(2+) pocket. Residues S249, I251, and T254 each coordinate K(+). T255 contributes to the Mg(2+) binding site. K465 contributes to the (6S)-5-formyl-5,6,7,8-tetrahydrofolate binding site.

Belongs to the TRAFAC class TrmE-Era-EngA-EngB-Septin-like GTPase superfamily. TrmE GTPase family. Homodimer. Heterotetramer of two MnmE and two MnmG subunits. K(+) is required as a cofactor.

The protein resides in the cytoplasm. In terms of biological role, exhibits a very high intrinsic GTPase hydrolysis rate. Involved in the addition of a carboxymethylaminomethyl (cmnm) group at the wobble position (U34) of certain tRNAs, forming tRNA-cmnm(5)s(2)U34. The chain is tRNA modification GTPase MnmE from Bacteroides thetaiotaomicron (strain ATCC 29148 / DSM 2079 / JCM 5827 / CCUG 10774 / NCTC 10582 / VPI-5482 / E50).